Reading from the N-terminus, the 64-residue chain is Beta-defensin 1 (64 aa).

A signal peptide spans 1–22 (MRLHHLLLVLFFVVLSAGSGFT). 3 disulfide bridges follow: C31–C60, C38–C53, and C43–C61.

Belongs to the beta-defensin family. Monomer. Homodimer.

The protein resides in the secreted. Its subcellular location is the membrane. Functionally, has bactericidal activity. May act as a ligand for C-C chemokine receptor CCR6. Positively regulates the sperm motility and bactericidal activity in a CCR6-dependent manner. Binds to CCR6 and triggers Ca2+ mobilization in the sperm which is important for its motility. This is Beta-defensin 1 (DEFB1) from Ovis aries (Sheep).